Here is an 812-residue protein sequence, read N- to C-terminus: Lon protease (812 aa).

One can recognise a Lon N-terminal domain in the interval 12-205; it reads LPMLPLRGVL…YLCELLAKEM (194 aa). An ATP-binding site is contributed by 357–364; sequence GPPGVGKT. Positions 593 to 774 constitute a Lon proteolytic domain; it reads ENQVGVATGL…DEVLEETLLK (182 aa). Active-site residues include serine 680 and lysine 723.

It belongs to the peptidase S16 family. As to quaternary structure, homohexamer. Organized in a ring with a central cavity.

It localises to the cytoplasm. The catalysed reaction is Hydrolysis of proteins in presence of ATP.. Functionally, ATP-dependent serine protease that mediates the selective degradation of mutant and abnormal proteins as well as certain short-lived regulatory proteins. Required for cellular homeostasis and for survival from DNA damage and developmental changes induced by stress. Degrades polypeptides processively to yield small peptide fragments that are 5 to 10 amino acids long. Binds to DNA in a double-stranded, site-specific manner. This chain is Lon protease, found in Syntrophomonas wolfei subsp. wolfei (strain DSM 2245B / Goettingen).